The sequence spans 190 residues: Guanylate kinase (190 aa).

Positions 3–185 (NYIFIVSAPS…SLEQFCKYFE (183 aa)) constitute a Guanylate kinase-like domain. An ATP-binding site is contributed by 10 to 17 (APSGAGKS).

This sequence belongs to the guanylate kinase family.

The protein resides in the cytoplasm. The enzyme catalyses GMP + ATP = GDP + ADP. Its function is as follows. Essential for recycling GMP and indirectly, cGMP. The polypeptide is Guanylate kinase (Francisella tularensis subsp. tularensis (strain FSC 198)).